The following is a 281-amino-acid chain: MIGYGVCVGPGTLFERTCLPGIERVRAPGSPVFTMRNQRSLFSAYNAMFDQAAANSDITGLVMLHDDVELRKNPAEVAQSVFEDDSVGMLGSVGGSDTVSLAWWNERETRRGRVTDYDKVHDYGSDRYEVEAVDDVILCVNRWTIENIRFPEGHYRGFEGLGVILATLVRAAGKRVMVQDLQDVMHHNDGRGFNGLKDWRHNELRWHREFFDLSPAERLGNHLERLTIPAVPLRLAARRLAMRVGGRSHEVSDGETGDPVIDRLVGGWYRQCTRLRGRMLV.

It functions in the pathway antibiotic biosynthesis; streptomycin biosynthesis. In terms of biological role, may be involved in the formation of N-methyl-L-glucosamine. This chain is Streptomycin biosynthesis protein StrF (strF), found in Streptomyces griseus.